The sequence spans 331 residues: N-arachidonyl glycine receptor (331 aa).

The Extracellular portion of the chain corresponds to 1-26 (MITLNNQDQPVPFNNSYPDEYEIAAL). Asparagine 14 carries N-linked (GlcNAc...) asparagine glycosylation. Residues 27–47 (VFYSCIFIIGLFVNITALWVF) traverse the membrane as a helical segment. Topologically, residues 48 to 56 (SCTTKKRTT) are cytoplasmic. The chain crosses the membrane as a helical span at residues 57 to 77 (VTIYMMNVALVDLIFIMTLPF). Topologically, residues 78 to 95 (RMFYYAKDEWPFGEYFCQ) are extracellular. A disulfide bridge links cysteine 94 with cysteine 172. Residues 96–116 (ILGALTVFYPSIALWLLAFIS) traverse the membrane as a helical segment. The Cytoplasmic portion of the chain corresponds to 117-138 (ADRYMAIVQPKYAKELKNTCKA). Residues 139 to 159 (VLACVGVWIMTLTTTIPLLLL) form a helical membrane-spanning segment. At 160–191 (HKDPDKDSTPATCLKISDIVYLKAVNVLNFTR) the chain is on the extracellular side. An N-linked (GlcNAc...) asparagine glycan is attached at asparagine 188. Residues 192–212 (LTFFFLIPLFIMIGCYLVIIH) form a helical membrane-spanning segment. The Cytoplasmic segment spans residues 213-232 (NLLHGRTSKLKPKVKEKSIR). A helical transmembrane segment spans residues 233–253 (IIITLLVQVLVCFMPFHICFA). At 254–268 (FLMLGTGENSYSPWG) the chain is on the extracellular side. A helical transmembrane segment spans residues 269–289 (AFTTFLMNLSTCLDVILYYIV). Topologically, residues 290 to 331 (SKQFQARVISVMLYRNYLRGMRRKSFRSGSLRSLSNINSEML) are cytoplasmic. Phosphoserine is present on serine 322.

The protein belongs to the G-protein coupled receptor 1 family.

The protein localises to the cell membrane. The protein resides in the cytoplasmic vesicle membrane. Functionally, g protein-coupled receptor (GPCR) that plays a role in diverse physiological processes particularly within the immune and nervous systems. Becomes active when triggered by various endogenous ligands including endocannabinoid N-arachidonyl glycine (NAGly), delta-9-tetrahydrocannabinol or resolvin D2/RvD2 derived from the omega-3 fatty acid docosahexaenoic acid (DHA). Upon RvD2 binding, facilitates the resolution of inflammation, aiding in tissue repair and homeostasis. Mechanistically, RvD2 ligation initiates Galphas protein coupling, activation of cAMP-PKA signaling pathway and phosphorylation of STAT3, leading to RvD2-stimulated macrophage phagocytosis. Mediates NAGly-induced process of reorganization of actin filaments and induction of acrosomal exocytosis. Activation by N-arachidonoyl glycine (NAGly) can also induce apoptosis in macrophages. Plays a role in homeostasis of CD8+ subsets of intraepithelial lymphocytes (IELs) (CD8alphaalpha and CD8alphabeta IELs) in small intestine by supporting preferential migration of CD8alphaalpha T-cells to intraepithelial compartment over lamina propria compartment, and by mediating their reconstitution into small intestine after bone marrow transplant. Participates also in hypotensive responses, mediating reduction in intraocular and blood pressure. This is N-arachidonyl glycine receptor from Macaca fascicularis (Crab-eating macaque).